The primary structure comprises 105 residues: Iron-sulfur cluster assembly protein CyaY (105 aa).

This sequence belongs to the frataxin family.

Functionally, involved in iron-sulfur (Fe-S) cluster assembly. May act as a regulator of Fe-S biogenesis. This chain is Iron-sulfur cluster assembly protein CyaY, found in Dechloromonas aromatica (strain RCB).